Here is a 473-residue protein sequence, read N- to C-terminus: Trigger factor (473 aa).

The 88-residue stretch at Gly174–Pro261 folds into the PPIase FKBP-type domain. The interval Glu437 to Lys473 is disordered. Residues Lys456–Asn466 are compositionally biased toward basic and acidic residues.

The protein belongs to the FKBP-type PPIase family. Tig subfamily.

It localises to the cytoplasm. The enzyme catalyses [protein]-peptidylproline (omega=180) = [protein]-peptidylproline (omega=0). Involved in protein export. Acts as a chaperone by maintaining the newly synthesized protein in an open conformation. Functions as a peptidyl-prolyl cis-trans isomerase. This chain is Trigger factor, found in Prochlorococcus marinus (strain MIT 9515).